Reading from the N-terminus, the 31-residue chain is Basic phospholipase A2 13 (31 aa).

This sequence belongs to the phospholipase A2 family. Group I subfamily. It depends on Ca(2+) as a cofactor. In terms of tissue distribution, expressed by the venom gland.

It is found in the secreted. It catalyses the reaction a 1,2-diacyl-sn-glycero-3-phosphocholine + H2O = a 1-acyl-sn-glycero-3-phosphocholine + a fatty acid + H(+). Functionally, snake venom phospholipase A2 (PLA2) that inhibits neuromuscular transmission by blocking acetylcholine release from the nerve termini. PLA2 catalyzes the calcium-dependent hydrolysis of the 2-acyl groups in 3-sn-phosphoglycerides. The polypeptide is Basic phospholipase A2 13 (Bungarus fasciatus (Banded krait)).